Consider the following 520-residue polypeptide: Ribonuclease Y (520 aa).

A helical membrane pass occupies residues 3–23 (IEIAIVLILAAAGLGYFVGNM). A KH domain is found at 210–273 (SVSVVALPSD…EVAKIALEKL (64 aa)). In terms of domain architecture, HD spans 336–429 (VYQHSLEVAF…VQAADALSGA (94 aa)).

It belongs to the RNase Y family.

The protein localises to the cell membrane. Endoribonuclease that initiates mRNA decay. The chain is Ribonuclease Y from Geobacter metallireducens (strain ATCC 53774 / DSM 7210 / GS-15).